A 528-amino-acid polypeptide reads, in one-letter code: MSPERSASLEPDEHSSLLSDTASYISRDDLEDSKAKQIPTPIPKKQLGVLFSIRFTEPIIYSHLWPYINQFVNDIGVADGNPRYVGFYSGLIESVFACGEVCSIFMLSRLSDRIGRRPVLLPSALGVALFTALFGLSTSFTMMLVLRVCAGLLAGATPIVHSVVSELTDETNNALVVPLYGLITPIGFAIGPLIGGTLEHAATKYPNVFGYDFLRKYPYFLPSFVPCCLAVVGVTFGYFFLQETLPSIVRAKKRLERQKSTSSISSRTSTLYGATDDHNRDASESTALSPEEAEDEIDSKPQSIKALIVDPSMRAIMGSGTFLMFLYTSSDVLFSLYCFTAVEDGGVGLPPDEIGYAFSVAGVIAMLMQLCITPWVLRTFDKAKVYKFCMFSFPLVFALMGCLNPLAQTGYNEVSKTIHPTTTGLLYAAIAVLLLLARVCVMAFPISMMLIKQNADKNSLATANGLVQVSMTIARALCPTVSSSLFAYSTSNNILGGHLWVLIMVTISLAGVWQSMSIARVTKRKEEL.

Residues 1–20 (MSPERSASLEPDEHSSLLSD) form a disordered region. 5 helical membrane passes run 87–107 (FYSG…IFML), 125–145 (LGVA…MMLV), 148–168 (VCAG…SELT), 174–194 (ALVV…GPLI), and 220–240 (FLPS…GYFF). The segment covering 260-270 (STSSISSRTST) has biased composition (low complexity). Residues 260–299 (STSSISSRTSTLYGATDDHNRDASESTALSPEEAEDEIDS) are disordered. 6 consecutive transmembrane segments (helical) span residues 322–342 (FLMF…FTAV), 357–377 (AFSV…PWVL), 388–408 (FCMF…PLAQ), 424–444 (GLLY…VMAF), 460–479 (LATA…ALCP), and 493–513 (NILG…AGVW).

This sequence belongs to the major facilitator superfamily. TCR/Tet family.

The protein resides in the membrane. Its function is as follows. Major facilitator-type transporter; part of the gene cluster that mediates the biosynthesis of psilocybin, a psychotropic tryptamine-derived natural product. The protein is Major facilitator-type transporter psiT2 of Psilocybe cyanescens.